The sequence spans 126 residues: Protein ApaG (126 aa).

An ApaG domain is found at 2–126 (TELETSIKID…FRLSIPGLLH (125 aa)).

The sequence is that of Protein ApaG from Shewanella woodyi (strain ATCC 51908 / MS32).